The following is a 568-amino-acid chain: Hexose transporter 1 (568 aa).

Topologically, residues 1–32 (MATEEMREKSLKREAESLWDIPPESYASKACS) are cytoplasmic. The helical transmembrane segment at 33-53 (CMGTAAQLVMVAVLGSFQFGF) threads the bilayer. At 54–86 (NLSALNTSKAFIILDFGWCKDENGGHYSDCDTG) the chain is on the extracellular side. C72 and C83 are disulfide-bonded. The chain crosses the membrane as a helical span at residues 87 to 107 (LVYGSLINTAVFLGACVGCLL). The Cytoplasmic portion of the chain corresponds to 108–119 (GGRLTDFGRRAS). Residues 120–140 (LIFTHCVCTLGCILSAAAEGF) traverse the membrane as a helical segment. Over 141–142 (PT) the chain is Extracellular. A helical transmembrane segment spans residues 143-163 (LLIARLVVGVAVGMFTVCVPM). Over 164–182 (YLSEVTPDDRRGYFGTFHQ) the chain is Cytoplasmic. Q182 provides a ligand contact to alpha-D-glucose. Residue Q182 coordinates beta-D-glucose. Residues 183–203 (LFITLGIFFGTLLGLAFGNAP) traverse the membrane as a helical segment. Residues 204–220 (AGDEVYEVSTFQQAWWR) are Extracellular-facing. Residues 221–241 (VMLGLPAVVSLLAIWLLWFVF) form a helical membrane-spanning segment. The Cytoplasmic segment spans residues 242–306 (PFETPQYMVE…KAIVHPTYRS (65 aa)). A helical transmembrane segment spans residues 307–327 (VILLACLLSIMQQFTGINVLV). The alpha-D-glucose site is built by Q318, Q319, and N324. A beta-D-glucose-binding site is contributed by Q318. N324 is a beta-D-glucose binding site. Topologically, residues 328–345 (ANSNNLYSSLKLPQDAVT) are extracellular. Residues 346–366 (GLTVGFTALNVFLTVITIPLV) form a helical membrane-spanning segment. N355 is a binding site for beta-D-glucose. Topologically, residues 367–374 (DRLGRRTL) are cytoplasmic. Residues 375 to 395 (LLFSEAVMFVAMGIAFVANLV) form a helical membrane-spanning segment. At 396–406 (DQSNTAVQWVT) the chain is on the extracellular side. Residues 407–427 (VACVYVFIVGFAVGYGPVLWI) traverse the membrane as a helical segment. W426 is a binding site for alpha-D-glucose. Over 428-443 (YIHEIFPPEIKQGAAS) the chain is Cytoplasmic. Residues 444 to 464 (LASALNWVATVAIVLPSDFLL) form a helical membrane-spanning segment. At 465-469 (KQGFS) the chain is on the extracellular side. Residues 470 to 490 (VFVGICTVALAIIFVVTFIFV) traverse the membrane as a helical segment. The Cytoplasmic segment spans residues 491–568 (KETKGLSIEE…DDLTKGTEVV (78 aa)).

This sequence belongs to the major facilitator superfamily. Sugar transporter (TC 2.A.1.1) family. As to quaternary structure, homodimer.

It localises to the cell membrane. The catalysed reaction is D-glucose(out) = D-glucose(in). It catalyses the reaction D-fructose(out) = D-fructose(in). It carries out the reaction D-galactose(in) = D-galactose(out). The enzyme catalyses D-mannose(out) = D-mannose(in). The catalysed reaction is D-glucosamine(out) = D-glucosamine(in). It catalyses the reaction D-xylose(out) = D-xylose(in). Its activity is regulated as follows. Inhibited by cytochalasin B. Sodium-independent facilitative hexose transporter. Can transport D-glucose and D-mannose with high affinity, and D-fructose and D-galactose with low affinity. Can transport D-xylose and D-glucosamine. The sequence is that of Hexose transporter 1 from Toxoplasma gondii.